The following is a 182-amino-acid chain: NADH-quinone oxidoreductase subunit B 2 (182 aa).

4 residues coordinate [4Fe-4S] cluster: Cys-57, Cys-58, Cys-123, and Cys-153.

The protein belongs to the complex I 20 kDa subunit family. In terms of assembly, NDH-1 is composed of 14 different subunits. Subunits NuoB, C, D, E, F, and G constitute the peripheral sector of the complex. The cofactor is [4Fe-4S] cluster.

It is found in the cell membrane. It carries out the reaction a quinone + NADH + 5 H(+)(in) = a quinol + NAD(+) + 4 H(+)(out). Its function is as follows. NDH-1 shuttles electrons from NADH, via FMN and iron-sulfur (Fe-S) centers, to quinones in the respiratory chain. The immediate electron acceptor for the enzyme in this species is believed to be a menaquinone. Couples the redox reaction to proton translocation (for every two electrons transferred, four hydrogen ions are translocated across the cytoplasmic membrane), and thus conserves the redox energy in a proton gradient. The chain is NADH-quinone oxidoreductase subunit B 2 from Symbiobacterium thermophilum (strain DSM 24528 / JCM 14929 / IAM 14863 / T).